The following is a 317-amino-acid chain: Annexin A13 (317 aa).

Gly-2 carries N-myristoyl glycine lipidation. Annexin repeat units lie at residues 15-86, 87-158, 170-242, and 246-317; these read FDAD…ALLD, RPNE…SLLQ, ELAG…TIVR, and DLEG…ALLH.

Belongs to the annexin family. As to quaternary structure, monomer and homodimer. Detected on the tips of microvilli in small intestine (at protein level).

It is found in the apical cell membrane. The protein resides in the cell membrane. Its subcellular location is the cytoplasmic vesicle. In terms of biological role, binds to membranes enriched in phosphatidylserine or phosphatidylglycerol in a calcium-dependent manner. Half-maximal membrane binding requires about 60 uM calcium. Does not bind to membranes that lack phospholipids with an acidic headgroup. The protein is Annexin A13 (Anxa13) of Mus musculus (Mouse).